The following is a 241-amino-acid chain: Glucosamine-6-phosphate deaminase (241 aa).

The active-site Proton acceptor; for enolization step is the D67. Residue N136 is the For ring-opening step of the active site. H138 (proton acceptor; for ring-opening step) is an active-site residue. The active-site For ring-opening step is E143.

Belongs to the glucosamine/galactosamine-6-phosphate isomerase family. NagB subfamily.

It carries out the reaction alpha-D-glucosamine 6-phosphate + H2O = beta-D-fructose 6-phosphate + NH4(+). It functions in the pathway amino-sugar metabolism; N-acetylneuraminate degradation; D-fructose 6-phosphate from N-acetylneuraminate: step 5/5. Functionally, catalyzes the reversible isomerization-deamination of glucosamine 6-phosphate (GlcN6P) to form fructose 6-phosphate (Fru6P) and ammonium ion. The polypeptide is Glucosamine-6-phosphate deaminase (Clostridium acetobutylicum (strain ATCC 824 / DSM 792 / JCM 1419 / IAM 19013 / LMG 5710 / NBRC 13948 / NRRL B-527 / VKM B-1787 / 2291 / W)).